We begin with the raw amino-acid sequence, 400 residues long: Probable peptidoglycan glycosyltransferase FtsW (400 aa).

The Cytoplasmic portion of the chain corresponds to 1-24 (MSTGSLPLGLPSRDSLDGLRNSVD). A helical transmembrane segment spans residues 25 to 45 (LPLLAAAALLLGLGLIMVASA). At 46–63 (SMDLGERYYGNTWHFFQR) the chain is on the periplasmic side. A helical membrane pass occupies residues 64-84 (QVLFAAIGLALATVMWAIPLE). The Cytoplasmic portion of the chain corresponds to 85 to 88 (RWER). The helical transmembrane segment at 89–109 (AGPWLLILVMVLLIAVLLPGV) threads the bilayer. At 110–118 (GRTVNGATR) the chain is on the periplasmic side. The helical transmembrane segment at 119–139 (WIPIGMFNLQVAEPVKLLVVM) threads the bilayer. Over 140-153 (YLAGYIVRHYSALR) the chain is Cytoplasmic. Residues 154 to 174 (LHLRGFVRPLVVLGFGTVLLL) traverse the membrane as a helical segment. Residues 175–177 (LQP) are Periplasmic-facing. Residues 178–198 (DFGGAAIMLAIGMGMLFLAGA) traverse the membrane as a helical segment. Position 199 (K199) is a topological domain, cytoplasmic. Residues 200 to 220 (LWQFAALGATIAVGMAFVAVA) form a helical membrane-spanning segment. At 221–278 (APYRVARLTAFLDPWQDPFATGFQLTQSLIAIGSGGWFGTGLGNSVQKLFYLPEAHND) the chain is on the periplasmic side. Residues 279–299 (FLFAVFAEEFGFIGVLALIAL) form a helical membrane-spanning segment. At 300–324 (FAVVVWRCVKIGLWAERAGHAFGSH) the chain is on the cytoplasmic side. The helical transmembrane segment at 325 to 345 (LAFGVAIWLALQSALNLAVNM) threads the bilayer. At 346–354 (GLLPTKGMT) the chain is on the periplasmic side. Residues 355 to 375 (LPFLSYGGSSLIVTLMAIGLV) form a helical membrane-spanning segment. Residues 376-400 (MRVYREAQIPAPRQSTPPRRKRGQA) are Cytoplasmic-facing.

The protein belongs to the SEDS family. FtsW subfamily.

It localises to the cell inner membrane. The catalysed reaction is [GlcNAc-(1-&gt;4)-Mur2Ac(oyl-L-Ala-gamma-D-Glu-L-Lys-D-Ala-D-Ala)](n)-di-trans,octa-cis-undecaprenyl diphosphate + beta-D-GlcNAc-(1-&gt;4)-Mur2Ac(oyl-L-Ala-gamma-D-Glu-L-Lys-D-Ala-D-Ala)-di-trans,octa-cis-undecaprenyl diphosphate = [GlcNAc-(1-&gt;4)-Mur2Ac(oyl-L-Ala-gamma-D-Glu-L-Lys-D-Ala-D-Ala)](n+1)-di-trans,octa-cis-undecaprenyl diphosphate + di-trans,octa-cis-undecaprenyl diphosphate + H(+). The protein operates within cell wall biogenesis; peptidoglycan biosynthesis. Functionally, peptidoglycan polymerase that is essential for cell division. The sequence is that of Probable peptidoglycan glycosyltransferase FtsW from Thioalkalivibrio sp. (strain K90mix).